Reading from the N-terminus, the 335-residue chain is Glycerol-3-phosphate dehydrogenase [NAD(P)+] (335 aa).

S10, F11, R31, and K105 together coordinate NADPH. K105, G136, and S138 together coordinate sn-glycerol 3-phosphate. An NADPH-binding site is contributed by A140. Positions 191, 244, 254, 255, and 256 each coordinate sn-glycerol 3-phosphate. Catalysis depends on K191, which acts as the Proton acceptor. R255 serves as a coordination point for NADPH. V279 and E281 together coordinate NADPH.

This sequence belongs to the NAD-dependent glycerol-3-phosphate dehydrogenase family.

It localises to the cytoplasm. It carries out the reaction sn-glycerol 3-phosphate + NAD(+) = dihydroxyacetone phosphate + NADH + H(+). It catalyses the reaction sn-glycerol 3-phosphate + NADP(+) = dihydroxyacetone phosphate + NADPH + H(+). The protein operates within membrane lipid metabolism; glycerophospholipid metabolism. In terms of biological role, catalyzes the reduction of the glycolytic intermediate dihydroxyacetone phosphate (DHAP) to sn-glycerol 3-phosphate (G3P), the key precursor for phospholipid synthesis. This is Glycerol-3-phosphate dehydrogenase [NAD(P)+] from Leptospira borgpetersenii serovar Hardjo-bovis (strain JB197).